Reading from the N-terminus, the 173-residue chain is Photosystem I assembly protein Ycf3 (173 aa).

TPR repeat units lie at residues 35 to 68 (AFVY…EEDP), 72 to 105 (SYIL…NPRM), and 120 to 153 (GEKA…APNN).

Belongs to the Ycf3 family.

The protein localises to the cellular thylakoid membrane. Essential for the assembly of the photosystem I (PSI) complex. May act as a chaperone-like factor to guide the assembly of the PSI subunits. This chain is Photosystem I assembly protein Ycf3, found in Microcystis aeruginosa (strain NIES-843 / IAM M-2473).